A 592-amino-acid chain; its full sequence is Malic enzyme, hydrogenosomal (592 aa).

Residues 1-27 (MLAPIQTIARPVSSILPATGALAAKRT) constitute a hydrogenosome transit peptide. Y134 acts as the Proton donor in catalysis. 182–205 (VTDGSRILGLGDLGAGGMQIPIGK) serves as a coordination point for NADP(+). R187 is a binding site for NAD(+). K205 (proton acceptor) is an active-site residue. A divalent metal cation-binding residues include E276, D277, and D300. D300 lines the NAD(+) pocket. NADP(+) is bound at residue 335–352 (GAGSSGVGVCETIVDCIV). An NAD(+)-binding site is contributed by N443.

It belongs to the malic enzymes family. Mg(2+) serves as cofactor. Mn(2+) is required as a cofactor.

It is found in the hydrogenosome. It catalyses the reaction (S)-malate + NADP(+) = pyruvate + CO2 + NADPH. It carries out the reaction oxaloacetate + H(+) = pyruvate + CO2. The sequence is that of Malic enzyme, hydrogenosomal from Neocallimastix frontalis (Rumen fungus).